Reading from the N-terminus, the 445-residue chain is Chromosomal replication initiator protein DnaA (445 aa).

The interval 1 to 69 (MEKIWLEAQS…IEAISSLTNI (69 aa)) is domain I, interacts with DnaA modulators. A domain II region spans residues 69 to 108 (IKYQVDFKITEKSQVEKKKVDLQATEKIENDSTRNVDFNT). Residues 109–325 (NLNPKYTFDS…GMLIRLGAYA (217 aa)) are domain III, AAA+ region. ATP-binding residues include Gly153, Gly155, Lys156, and Thr157. Positions 326-445 (SLTGSEISLN…VEKMKKELMS (120 aa)) are domain IV, binds dsDNA.

This sequence belongs to the DnaA family. Oligomerizes as a right-handed, spiral filament on DNA at oriC.

Its subcellular location is the cytoplasm. Functionally, plays an essential role in the initiation and regulation of chromosomal replication. ATP-DnaA binds to the origin of replication (oriC) to initiate formation of the DNA replication initiation complex once per cell cycle. Binds the DnaA box (a 9 base pair repeat at the origin) and separates the double-stranded (ds)DNA. Forms a right-handed helical filament on oriC DNA; dsDNA binds to the exterior of the filament while single-stranded (ss)DNA is stabiized in the filament's interior. The ATP-DnaA-oriC complex binds and stabilizes one strand of the AT-rich DNA unwinding element (DUE), permitting loading of DNA polymerase. After initiation quickly degrades to an ADP-DnaA complex that is not apt for DNA replication. Binds acidic phospholipids. The chain is Chromosomal replication initiator protein DnaA from Geotalea daltonii (strain DSM 22248 / JCM 15807 / FRC-32) (Geobacter daltonii).